A 575-amino-acid chain; its full sequence is Serine/threonine-protein kinase STY46 (575 aa).

A disordered region spans residues 116 to 140 (ADLDSTSNDAGHSSPTRKSIHPPPA). Over residues 118–132 (LDSTSNDAGHSSPTR) the composition is skewed to polar residues. Residues 178–252 (EITFSTEDKP…AKIELQSQSW (75 aa)) form the ACT domain. In terms of domain architecture, Protein kinase spans 290-543 (LKFGHKIASG…EIIEQLQEIA (254 aa)). Residues 296-304 (IASGSYGDL) and K317 contribute to the ATP site. The active-site Proton acceptor is the D411. A Phosphothreonine modification is found at T443.

It belongs to the protein kinase superfamily. Ser/Thr protein kinase family. Autophosphorylated on serine and threonine residues. Autophosphorylated at Thr-443.

It localises to the cytoplasm. The protein resides in the cytosol. It carries out the reaction L-seryl-[protein] + ATP = O-phospho-L-seryl-[protein] + ADP + H(+). It catalyses the reaction L-threonyl-[protein] + ATP = O-phospho-L-threonyl-[protein] + ADP + H(+). With respect to regulation, activated by autophosphorylation at Thr-443. Serine/threonine protein kinase that specifically phosphorylates chloroplast precursor proteins in the cytosol within the cleavable presequences (transit peptides). May be part of a cytosolic regulatory network involved in chloroplast protein import. Does not phosphorylate mitochondrion precursor proteins. Specific for ATP and does not utilize other NTPs. Plays a role in chloroplast biogenesis and differentiation in cotyledons, possibly through phosphorylation of chloroplast preproteins. The sequence is that of Serine/threonine-protein kinase STY46 from Arabidopsis thaliana (Mouse-ear cress).